A 167-amino-acid chain; its full sequence is Insertion element IS1 2 protein InsB (167 aa).

The protein belongs to the transposase 27 family.

Its function is as follows. Absolutely required for transposition of IS1. The polypeptide is Insertion element IS1 2 protein InsB (insB2) (Escherichia coli (strain K12)).